The sequence spans 320 residues: Nodulation efficiency protein NfeD (320 aa).

This sequence belongs to the ornithine cyclodeaminase/mu-crystallin family.

Functionally, seems to be involved in the nodulation efficiency of R.meliloti GR4 on alfalfa roots. In Rhizobium meliloti (Ensifer meliloti), this protein is Nodulation efficiency protein NfeD.